Consider the following 290-residue polypeptide: Phosphoribulokinase (290 aa).

12 to 20 contributes to the ATP binding site; that stretch reads GSSGAGTTS.

This sequence belongs to the phosphoribulokinase family.

It carries out the reaction D-ribulose 5-phosphate + ATP = D-ribulose 1,5-bisphosphate + ADP + H(+). The protein operates within carbohydrate biosynthesis; Calvin cycle. This Nitrobacter vulgaris protein is Phosphoribulokinase (cbbP).